Consider the following 142-residue polypeptide: Hemoglobin subunit alpha (142 aa).

The region spanning 2 to 142 (VLSAADKTNV…VSTVLTSKYR (141 aa)) is the Globin domain. Serine 4 bears the Phosphoserine mark. N6-succinyllysine is present on lysine 8. Residue threonine 9 is modified to Phosphothreonine. Residue lysine 12 is modified to N6-succinyllysine. N6-acetyllysine; alternate is present on lysine 17. Lysine 17 carries the N6-succinyllysine; alternate modification. At tyrosine 25 the chain carries Phosphotyrosine. Lysine 41 carries the N6-succinyllysine modification. Serine 50 is modified (phosphoserine). Histidine 59 is a binding site for O2. Histidine 88 provides a ligand contact to heme b. Phosphoserine is present on serine 103. Threonine 109 carries the phosphothreonine modification. 2 positions are modified to phosphoserine: serine 125 and serine 132. Residues threonine 135 and threonine 138 each carry the phosphothreonine modification. Serine 139 is subject to Phosphoserine.

Belongs to the globin family. Heterotetramer of two alpha chains and two beta chains. As to expression, red blood cells.

Its function is as follows. Involved in oxygen transport from the lung to the various peripheral tissues. Hemopressin acts as an antagonist peptide of the cannabinoid receptor CNR1. Hemopressin-binding efficiently blocks cannabinoid receptor CNR1 and subsequent signaling. The polypeptide is Hemoglobin subunit alpha (HBA) (Equus caballus (Horse)).